The chain runs to 757 residues: Serine/threonine-protein phosphatase 2A 56 kDa regulatory subunit delta isoform (757 aa).

A compositionally biased stretch (basic residues) spans 1 to 11; sequence MMRGFKQRLIK. Disordered regions lie at residues 1 to 172 and 188 to 250; these read MMRG…EDHA and ISNA…NPDT. Low complexity predominate over residues 12-21; the sequence is KTTGSSSSSS. The span at 23 to 34 shows a compositional bias: basic and acidic residues; it reads KKKDKEKEKEKS. 3 stretches are compositionally biased toward low complexity: residues 35–66, 86–119, and 128–147; these read STTS…GSKS, SSTS…STKK, and QSKQ…SSSS. The span at 160 to 172 shows a compositional bias: basic and acidic residues; the sequence is TKDDKSTSGEDHA. Residues 197-216 show a composition bias toward low complexity; sequence SSDVENGNSNNNNMNINTSN. Over residues 217–228 the composition is skewed to polar residues; it reads TQDANHASSQSI. A phosphothreonine mark is found at Thr-242 and Thr-257. The interval 734 to 757 is disordered; sequence SFNTASENNTLNEENENDCDSEIQ. Over residues 746–757 the composition is skewed to acidic residues; the sequence is EENENDCDSEIQ.

This sequence belongs to the phosphatase 2A regulatory subunit B family. PP2A consists of a common heterodimeric core enzyme, composed of a 36 kDa catalytic subunit (subunit C) and a 65 kDa constant regulatory subunit (PR65 or subunit A), that associates with a variety of regulatory subunits. Proteins that associate with the core dimer include three families of regulatory subunits B (the R2/B/PR55/B55, R3/B''/PR72/PR130/PR59 and R5/B'/B56 families), the 48 kDa variable regulatory subunit, viral proteins, and cell signaling molecules.

Its subcellular location is the cytoplasm. It localises to the nucleus. In terms of biological role, the B regulatory subunit might modulate substrate selectivity and catalytic activity, and might also direct the localization of the catalytic enzyme to a particular subcellular compartment. Multicopy suppressor of ROX3 and HSP60. The sequence is that of Serine/threonine-protein phosphatase 2A 56 kDa regulatory subunit delta isoform (RTS1) from Saccharomyces cerevisiae (strain ATCC 204508 / S288c) (Baker's yeast).